The sequence spans 466 residues: NADPH:adrenodoxin oxidoreductase, mitochondrial (466 aa).

FAD is bound by residues A40, E61, L69, and L105. NADP(+) is bound by residues Q176 to V179, R220 to R221, and E232. FAD-binding positions include W379 and G386 to I388. G386 serves as a coordination point for NADP(+).

It belongs to the ferredoxin--NADP reductase type 1 family. Requires FAD as cofactor. In terms of tissue distribution, expressed predominantly in prothoracic gland of the larval ring gland and nurse cells of the adult ovary. Low expression is all adult tissues examined.

The protein localises to the mitochondrion inner membrane. It carries out the reaction 2 reduced [adrenodoxin] + NADP(+) + H(+) = 2 oxidized [adrenodoxin] + NADPH. The protein operates within steroid metabolism; cholesterol metabolism. Functionally, required for synthesis of steroid hormones, for olfactory sensory behavior and completion of the second larval molt (a steroid mediated developmental transition) and pupariation. The sequence is that of NADPH:adrenodoxin oxidoreductase, mitochondrial (dare) from Drosophila melanogaster (Fruit fly).